The sequence spans 156 residues: Histone H2B.2 (156 aa).

2 stretches are compositionally biased toward basic and acidic residues: residues Met-1–Ala-10 and Ala-24–Lys-58. The interval Met-1 to Lys-63 is disordered. Residues Lys-40 and Lys-41 each carry the N6-acetyllysine modification. Residue Lys-152 forms a Glycyl lysine isopeptide (Lys-Gly) (interchain with G-Cter in ubiquitin) linkage.

The protein belongs to the histone H2B family. In terms of assembly, the nucleosome is a histone octamer containing two molecules each of H2A, H2B, H3 and H4 assembled in one H3-H4 heterotetramer and two H2A-H2B heterodimers. The octamer wraps approximately 147 bp of DNA. Post-translationally, the N-terminus is blocked. In terms of processing, can be acetylated to form H2BK33ac and H2BK34ac. Acetylated mainly on the ubiquitinated form. Monoubiquitinated to form H2BK143ub1; which is increased during the light period and may give a specific tag for epigenetic transcriptional activation.

The protein localises to the nucleus. The protein resides in the chromosome. Functionally, core component of nucleosome. Nucleosomes wrap and compact DNA into chromatin, limiting DNA accessibility to the cellular machineries which require DNA as a template. Histones thereby play a central role in transcription regulation, DNA repair, DNA replication and chromosomal stability. DNA accessibility is regulated via a complex set of post-translational modifications of histones, also called histone code, and nucleosome remodeling. The chain is Histone H2B.2 from Chlamydomonas reinhardtii (Chlamydomonas smithii).